The following is a 110-amino-acid chain: Prothymosin alpha (110 aa).

Met-1 is subject to N-acetylmethionine. Residues 1-110 (MSDAAVDTSS…TKKQKTDEDD (110 aa)) are disordered. An N-acetylserine; in Prothymosin alpha, N-terminally processed modification is found at Ser-2. Ser-2 is modified (phosphoserine). Thr-8 carries the post-translational modification Phosphothreonine. Phosphoserine is present on residues Ser-9 and Ser-10. Residues Thr-13 and Thr-14 each carry the phosphothreonine modification. Residues 13-31 (TTKDLKEKKEVVEEAENGR) show a composition bias toward basic and acidic residues. Lys-15 bears the N6-acetyllysine; alternate mark. Residue Lys-15 is modified to N6-succinyllysine; alternate. Positions 42–83 (ENGEQEADNEVDEEEEEGGEEEEEEEEGDGEEEDGDEDEEAE) are enriched in acidic residues. Positions 100-110 (DTKKQKTDEDD) are enriched in basic and acidic residues. Position 101 is a phosphothreonine (Thr-101). Lys-102 is modified (N6-acetyllysine; alternate). Lys-102 is covalently cross-linked (Glycyl lysine isopeptide (Lys-Gly) (interchain with G-Cter in SUMO2); alternate). Thr-106 carries the phosphothreonine modification.

It belongs to the pro/parathymosin family. As to quaternary structure, interacts with NUPR1; regulates apoptotic process. In terms of processing, covalently linked to a small RNA of about 20 nucleotides.

The protein resides in the nucleus. Functionally, prothymosin alpha may mediate immune function by conferring resistance to certain opportunistic infections. This is Prothymosin alpha (PTMA) from Pongo abelii (Sumatran orangutan).